Here is a 129-residue protein sequence, read N- to C-terminus: Glycerol-3-phosphate cytidylyltransferase (129 aa).

CTP contacts are provided by residues T9–F10 and H14–H17. K44 provides a ligand contact to substrate. K46 serves as a coordination point for CTP. Substrate is bound at residue K77. R113–T120 contacts CTP.

The protein belongs to the cytidylyltransferase family. As to quaternary structure, homodimer.

The protein localises to the cytoplasm. It catalyses the reaction sn-glycerol 3-phosphate + CTP + H(+) = CDP-glycerol + diphosphate. It functions in the pathway cell wall biogenesis; poly(ribitol phosphate) teichoic acid biosynthesis. Its function is as follows. Catalyzes the transfer of the cytidylyl group of CTP to sn-glycerol 3-phosphate so the activated glycerol 3-phosphate can be used for teichoic acid synthesis, via incorporation into both the linkage unit by TarB and TarF. The sequence is that of Glycerol-3-phosphate cytidylyltransferase (tarD) from Bacillus spizizenii (strain ATCC 23059 / NRRL B-14472 / W23) (Bacillus subtilis subsp. spizizenii).